The sequence spans 180 residues: Nascent polypeptide-associated complex subunit alpha (180 aa).

The NAC-A/B domain occupies 16-80 (SKNEKKAREL…AKVDDMNKRI (65 aa)). Residues 81–113 (AEAQQQQAQQDALSKAAGETGEAGEEDKSQDAI) are disordered. Low complexity predominate over residues 82–100 (EAQQQQAQQDALSKAAGET). The UBA domain occupies 142 to 179 (LDAKDIDIIVEQTQVSRAKAVKALRVHDGDMVNAIMEL).

This sequence belongs to the NAC-alpha family. Part of the nascent polypeptide-associated complex (NAC), consisting of EGD2 and EGD1. NAC associates with ribosomes via EGD1.

Its subcellular location is the cytoplasm. It is found in the nucleus. In terms of biological role, component of the nascent polypeptide-associated complex (NAC), a dynamic component of the ribosomal exit tunnel, protecting the emerging polypeptides from interaction with other cytoplasmic proteins to ensure appropriate nascent protein targeting. The NAC complex also promotes mitochondrial protein import by enhancing productive ribosome interactions with the outer mitochondrial membrane and blocks the inappropriate interaction of ribosomes translating non-secretory nascent polypeptides with translocation sites in the membrane of the endoplasmic reticulum. EGD2 may also be involved in transcription regulation. The polypeptide is Nascent polypeptide-associated complex subunit alpha (EGD2) (Debaryomyces hansenii (strain ATCC 36239 / CBS 767 / BCRC 21394 / JCM 1990 / NBRC 0083 / IGC 2968) (Yeast)).